A 200-amino-acid polypeptide reads, in one-letter code: Glutathione peroxidase 1 (200 aa).

The residue at position 31 (Ser-31) is a Phosphoserine. The active site involves Sec-46. Position 46 (Sec-46) is a non-standard amino acid, selenocysteine. N6-acetyllysine; alternate is present on residues Lys-85 and Lys-111. Lys-85 and Lys-111 each carry N6-succinyllysine; alternate. The residue at position 118 (Lys-118) is an N6-acetyllysine. Position 145 is an N6-acetyllysine; alternate (Lys-145). N6-succinyllysine; alternate is present on Lys-145. Residue Ser-194 is modified to Phosphoserine.

This sequence belongs to the glutathione peroxidase family. Homotetramer. Interacts with MIEN1. In terms of processing, during periods of oxidative stress, Sec-46 may react with a superoxide radical, irreversibly lose hydroselenide and be converted to dehydroalanine.

Its subcellular location is the cytoplasm. It localises to the mitochondrion. The catalysed reaction is 2 glutathione + H2O2 = glutathione disulfide + 2 H2O. The enzyme catalyses a hydroperoxy polyunsaturated fatty acid + 2 glutathione = a hydroxy polyunsaturated fatty acid + glutathione disulfide + H2O. It catalyses the reaction tert-butyl hydroperoxide + 2 glutathione = tert-butanol + glutathione disulfide + H2O. It carries out the reaction cumene hydroperoxide + 2 glutathione = 2-phenylpropan-2-ol + glutathione disulfide + H2O. The catalysed reaction is (13S)-hydroperoxy-(9Z,11E)-octadecadienoate + 2 glutathione = (13S)-hydroxy-(9Z,11E)-octadecadienoate + glutathione disulfide + H2O. The enzyme catalyses (9S)-hydroperoxy-(10E,12Z)-octadecadienoate + 2 glutathione = (9S)-hydroxy-(10E,12Z)-octadecadienoate + glutathione disulfide + H2O. It catalyses the reaction (5S)-hydroperoxy-(6E,8Z,11Z,14Z)-eicosatetraenoate + 2 glutathione = (5S)-hydroxy-(6E,8Z,11Z,14Z)-eicosatetraenoate + glutathione disulfide + H2O. It carries out the reaction (12S)-hydroperoxy-(5Z,8Z,10E,14Z)-eicosatetraenoate + 2 glutathione = (12S)-hydroxy-(5Z,8Z,10E,14Z)-eicosatetraenoate + glutathione disulfide + H2O. The catalysed reaction is (12R)-hydroperoxy-(5Z,8Z,10E,14Z)-eicosatetraenoate + 2 glutathione = (12R)-hydroxy-(5Z,8Z,10E,14Z)-eicosatetraenoate + glutathione disulfide + H2O. The enzyme catalyses (15S)-hydroperoxy-(5Z,8Z,11Z,13E)-eicosatetraenoate + 2 glutathione = (15S)-hydroxy-(5Z,8Z,11Z,13E)-eicosatetraenoate + glutathione disulfide + H2O. It catalyses the reaction (5S)-hydroperoxy-(6E,8Z,11Z,14Z,17Z)-eicosapentaenoate + 2 glutathione = (5S)-hydroxy-(6E,8Z,11Z,14Z,17Z)-eicosapentaenoate + glutathione disulfide + H2O. It carries out the reaction (12S)-hydroperoxy-(5Z,8Z,10E,14Z,17Z)-eicosapentaenoate + 2 glutathione = (12S)-hydroxy-(5Z,8Z,10E,14Z,17Z)-eicosapentaenoate + glutathione disulfide + H2O. The catalysed reaction is (15S)-hydroperoxy-(5Z,8Z,11Z,13E,17Z)-eicosapentaenoate + 2 glutathione = (15S)-hydroxy-(5Z,8Z,11Z,13E,17Z)-eicosapentaenoate + glutathione disulfide + H2O. The enzyme catalyses (15S)-hydroperoxy-(11Z,13E)-eicosadienoate + 2 glutathione = (15S)-hydroxy-(11Z,13E)-eicosadienoate + glutathione disulfide + H2O. It catalyses the reaction (17S)-hydroperoxy-(4Z,7Z,10Z,13Z,15E,19Z)-docosahexaenoate + 2 glutathione = (17S)-hydroxy-(4Z,7Z,10Z,13Z,15E,19Z)-docosahexaenoate + glutathione disulfide + H2O. Functionally, catalyzes the reduction of hydroperoxides in a glutathione-dependent manner thus regulating cellular redox homeostasis. Can reduce small soluble hydroperoxides such as H2O2, cumene hydroperoxide and tert-butyl hydroperoxide, as well as several fatty acid-derived hydroperoxides. In platelets catalyzes the reduction of 12-hydroperoxyeicosatetraenoic acid, the primary product of the arachidonate 12-lipoxygenase pathway. This is Glutathione peroxidase 1 (GPX1) from Oryctolagus cuniculus (Rabbit).